The chain runs to 837 residues: Putative dimethyl sulfoxide reductase catalytic subunit A (837 aa).

Residues 1 to 36 (MSDTDLNATRRDVLKSGAVAAVGLSGGGLLSTLQEA) constitute a signal peptide (tat-type signal). The 4Fe-4S Mo/W bis-MGD-type domain maps to 53 to 110 (DQVVKTACSPNCRGKCPLDVFVRDGQIKKVEQQVPAAKTFKRGCTLGMTHLQRVYNAD). [4Fe-4S] cluster contacts are provided by Cys-60, Cys-64, Cys-68, and Cys-96. Mo-bis(molybdopterin guanine dinucleotide) is bound at residue Asn-200. Residues 813-837 (EHQSNEYTQHNPRGSSGTATDGDSS) are disordered. The span at 826 to 837 (GSSGTATDGDSS) shows a compositional bias: low complexity.

This sequence belongs to the prokaryotic molybdopterin-containing oxidoreductase family. Probable multiprotein complex that likely consists of DmsA, DmsB and DmsC. The cofactor is Mo-bis(molybdopterin guanine dinucleotide). Requires [4Fe-4S] cluster as cofactor. In terms of processing, predicted to be exported by the Tat system. The position of the signal peptide cleavage has not been experimentally proven.

It localises to the cell membrane. The catalysed reaction is dimethyl sulfide + a menaquinone + H2O = dimethyl sulfoxide + a menaquinol. Dimethyl sulfoxide (DMSO) reductase catalyzes the reduction of dimethyl sulfoxide (DMSO) to dimethyl sulfide (DMS) during anaerobic respiration; it can also use trimethylamine N-oxide (TMAO) as terminal electron acceptor. Required for anaerobic respiration on DMSO and TMAO; subunit A is proposed to be catalytically active. This chain is Putative dimethyl sulfoxide reductase catalytic subunit A (dmsA), found in Halobacterium salinarum (strain ATCC 700922 / JCM 11081 / NRC-1) (Halobacterium halobium).